We begin with the raw amino-acid sequence, 219 residues long: Cytidylate kinase (219 aa).

21 to 29 provides a ligand contact to ATP; that stretch reads GPAASGKGT.

This sequence belongs to the cytidylate kinase family. Type 1 subfamily.

It localises to the cytoplasm. The enzyme catalyses CMP + ATP = CDP + ADP. It carries out the reaction dCMP + ATP = dCDP + ADP. The polypeptide is Cytidylate kinase (Rickettsia felis (strain ATCC VR-1525 / URRWXCal2) (Rickettsia azadi)).